The primary structure comprises 219 residues: Cytochrome c biogenesis ATP-binding export protein CcmA (219 aa).

An ABC transporter domain is found at 10–218; that stretch reads ISAVNLTCIR…TLDYSYDSAV (209 aa). 42–49 lines the ATP pocket; sequence GPNGSGKT.

It belongs to the ABC transporter superfamily. CcmA exporter (TC 3.A.1.107) family. In terms of assembly, the complex is composed of two ATP-binding proteins (CcmA) and two transmembrane proteins (CcmB).

The protein resides in the cell inner membrane. It catalyses the reaction heme b(in) + ATP + H2O = heme b(out) + ADP + phosphate + H(+). Its function is as follows. Part of the ABC transporter complex CcmAB involved in the biogenesis of c-type cytochromes; once thought to export heme, this seems not to be the case, but its exact role is uncertain. Responsible for energy coupling to the transport system. This chain is Cytochrome c biogenesis ATP-binding export protein CcmA, found in Colwellia psychrerythraea (strain 34H / ATCC BAA-681) (Vibrio psychroerythus).